Consider the following 129-residue polypeptide: NADH-quinone oxidoreductase subunit 15 (129 aa).

Belongs to the complex I Nqo15 family. As to quaternary structure, NDH-1 is composed of 15 different subunits, Nqo1 to Nqo15. The complex has a L-shaped structure, with the hydrophobic arm (subunits Nqo7, Nqo8 and Nqo10 to Nqo14) embedded in the membrane and the hydrophilic peripheral arm (subunits Nqo1 to Nqo6, Nqo9 and Nqo15) protruding into the bacterial cytoplasm. The hydrophilic domain contains all the redox centers. Nqo15 is bound to the side of the complex near the N-terminus of Nqo3, where it interacts with subunits Nqo3, Nqo2, Nqo1, Nqo9 and Nqo4.

The protein resides in the cell membrane. The enzyme catalyses a quinone + NADH + 5 H(+)(in) = a quinol + NAD(+) + 4 H(+)(out). Its function is as follows. NDH-1 shuttles electrons from NADH, via FMN and iron-sulfur (Fe-S) centers, to quinones in the respiratory chain. The immediate electron acceptor for the enzyme in this species is menaquinone. Couples the redox reaction to proton translocation (for every two electrons transferred, four hydrogen ions are translocated across the cytoplasmic membrane), and thus conserves the redox energy in a proton gradient required for the synthesis of ATP. The Nqo15 subunit has probably a role in complex stabilization, and may be also involved in the storage of iron for iron-sulfur cluster regeneration in the complex. The chain is NADH-quinone oxidoreductase subunit 15 (nqo15) from Thermus thermophilus (strain ATCC 27634 / DSM 579 / HB8).